A 188-amino-acid chain; its full sequence is Ribosome-recycling factor (188 aa).

This sequence belongs to the RRF family.

The protein localises to the cytoplasm. In terms of biological role, responsible for the release of ribosomes from messenger RNA at the termination of protein biosynthesis. May increase the efficiency of translation by recycling ribosomes from one round of translation to another. The chain is Ribosome-recycling factor from Bradyrhizobium diazoefficiens (strain JCM 10833 / BCRC 13528 / IAM 13628 / NBRC 14792 / USDA 110).